The primary structure comprises 618 residues: Citrolysin protein 1 (618 aa).

Its function is as follows. Bacterial hemolysins are exotoxins that attack blood cell membranes and cause cell rupture by mechanisms not clearly defined. This chain is Citrolysin protein 1, found in Citrobacter freundii.